Reading from the N-terminus, the 201-residue chain is Recombination protein RecR (201 aa).

The segment at 60-75 (CSECGNMDVSDPCTVC) adopts a C4-type zinc-finger fold. The Toprim domain maps to 83–178 (AAICVVETVG…SITSLARGVP (96 aa)).

This sequence belongs to the RecR family.

In terms of biological role, may play a role in DNA repair. It seems to be involved in an RecBC-independent recombinational process of DNA repair. It may act with RecF and RecO. In Maricaulis maris (strain MCS10) (Caulobacter maris), this protein is Recombination protein RecR.